The primary structure comprises 158 residues: uncharacterized protein (158 aa).

This is an uncharacterized protein from Mycoplasma pneumoniae (strain ATCC 29342 / M129 / Subtype 1) (Mycoplasmoides pneumoniae).